Consider the following 51-residue polypeptide: Probable antitoxin PhoAT (51 aa).

This sequence belongs to the PhoAT antitoxin family. Interacts with toxin PhoH2.

Its function is as follows. Antitoxin component of a type II toxin-antitoxin (TA) system. The cognate antitoxin is PhoAT; the toxin gene cannot be expressed in the absence of the antitoxin gene in M.smegmatis (strain mc(2)4517), and abrogates the toxic effects of PhoH2 in M.smegmatis strain mc(2)155. The sequence is that of Probable antitoxin PhoAT from Mycobacterium tuberculosis (strain ATCC 25618 / H37Rv).